The chain runs to 242 residues: Large ribosomal subunit protein uL3 (242 aa).

The segment at 131–165 (GRATHGNSVSHRTHGSTGQRQDPGKVFKGKKMAGH) is disordered. The span at 135–150 (HGNSVSHRTHGSTGQR) shows a compositional bias: polar residues. Residue Gln151 is modified to N5-methylglutamine.

Belongs to the universal ribosomal protein uL3 family. Part of the 50S ribosomal subunit. Forms a cluster with proteins L14 and L19. Methylated by PrmB.

Its function is as follows. One of the primary rRNA binding proteins, it binds directly near the 3'-end of the 23S rRNA, where it nucleates assembly of the 50S subunit. The polypeptide is Large ribosomal subunit protein uL3 (Chelativorans sp. (strain BNC1)).